Consider the following 375-residue polypeptide: tRNA-specific 2-thiouridylase MnmA 3 (375 aa).

ATP contacts are provided by residues 11 to 18 (GMSGGIDS) and Met-37. The Nucleophile role is filled by Cys-104. Cysteines 104 and 201 form a disulfide. Gly-128 provides a ligand contact to ATP. Residues 150–152 (KDQ) are interaction with tRNA. Residue Cys-201 is the Cysteine persulfide intermediate of the active site. Positions 309-310 (RY) are interaction with tRNA.

This sequence belongs to the MnmA/TRMU family.

The protein localises to the cytoplasm. It carries out the reaction S-sulfanyl-L-cysteinyl-[protein] + uridine(34) in tRNA + AH2 + ATP = 2-thiouridine(34) in tRNA + L-cysteinyl-[protein] + A + AMP + diphosphate + H(+). Its function is as follows. Catalyzes the 2-thiolation of uridine at the wobble position (U34) of tRNA, leading to the formation of s(2)U34. The sequence is that of tRNA-specific 2-thiouridylase MnmA 3 from Phocaeicola vulgatus (strain ATCC 8482 / DSM 1447 / JCM 5826 / CCUG 4940 / NBRC 14291 / NCTC 11154) (Bacteroides vulgatus).